Reading from the N-terminus, the 238-residue chain is Uridylate kinase (238 aa).

ATP is bound at residue 12 to 15 (KLSG). Gly-54 serves as a coordination point for UMP. The ATP site is built by Gly-55 and Arg-59. UMP is bound by residues Asp-74 and 135 to 142 (TGNPYFTT). ATP is bound by residues Thr-162, Asn-163, Tyr-168, and Asp-171.

Belongs to the UMP kinase family. Homohexamer.

Its subcellular location is the cytoplasm. The catalysed reaction is UMP + ATP = UDP + ADP. Its pathway is pyrimidine metabolism; CTP biosynthesis via de novo pathway; UDP from UMP (UMPK route): step 1/1. With respect to regulation, inhibited by UTP. Its function is as follows. Catalyzes the reversible phosphorylation of UMP to UDP. The protein is Uridylate kinase of Rhodopseudomonas palustris (strain ATCC BAA-98 / CGA009).